The chain runs to 200 residues: Nucleoside triphosphate pyrophosphatase (200 aa).

D79 serves as the catalytic Proton acceptor.

This sequence belongs to the Maf family. A divalent metal cation serves as cofactor.

It localises to the cytoplasm. It catalyses the reaction a ribonucleoside 5'-triphosphate + H2O = a ribonucleoside 5'-phosphate + diphosphate + H(+). The enzyme catalyses a 2'-deoxyribonucleoside 5'-triphosphate + H2O = a 2'-deoxyribonucleoside 5'-phosphate + diphosphate + H(+). Its function is as follows. Nucleoside triphosphate pyrophosphatase. May have a dual role in cell division arrest and in preventing the incorporation of modified nucleotides into cellular nucleic acids. The protein is Nucleoside triphosphate pyrophosphatase of Legionella pneumophila (strain Paris).